Reading from the N-terminus, the 479-residue chain is Poly(A) polymerase catalytic subunit (479 aa).

Residues D202 and D204 contribute to the active site. Ca(2+) contacts are provided by D202, D204, and D253.

The protein belongs to the poxviridae poly(A) polymerase catalytic subunit family. As to quaternary structure, heterodimer of a large (catalytic) subunit and a small (regulatory) subunit.

The catalysed reaction is RNA(n) + ATP = RNA(n)-3'-adenine ribonucleotide + diphosphate. In terms of biological role, polymerase that creates the 3'-poly(A) tail of mRNA's. The protein is Poly(A) polymerase catalytic subunit (OPG063) of Bos taurus (Bovine).